A 71-amino-acid chain; its full sequence is Paralithocin 2 (71 aa).

The first 23 residues, 1-23 (MGAAKVLLVVLAVMVAVPNLAEG), serve as a signal peptide directing secretion. Cystine bridges form between C29–C58, C34–C54, C39–C52, and C44–C55. R70 is subject to Arginine amide; partial.

This sequence belongs to the paralithocin family. Post-translationally, the amidated form is probably the active form.

Its function is as follows. Has antibacterial activity, mainly against marine Gram-positive bacteria like C.maltaromaticum (MIC=50 uM), C.mobile (MIC=50 uM), C.divergens (MIC=50 uM) and C.funditum (MIC=25 uM) but also against C.glutamicum (MIC=12.5 uM). Has very little or no activity against Gram-negative bacteria. The chain is Paralithocin 2 from Paralithodes camtschaticus (Red king crab).